The primary structure comprises 430 residues: Probable glucose-6-phosphate isomerase (430 aa).

Glutamate 271 acts as the Proton donor in catalysis. Active-site residues include histidine 292, histidine 303, and lysine 403.

It belongs to the GPI family.

It localises to the cytoplasm. It catalyses the reaction alpha-D-glucose 6-phosphate = beta-D-fructose 6-phosphate. It functions in the pathway carbohydrate biosynthesis; gluconeogenesis. Its pathway is carbohydrate degradation; glycolysis; D-glyceraldehyde 3-phosphate and glycerone phosphate from D-glucose: step 2/4. Functionally, catalyzes the reversible isomerization of glucose-6-phosphate to fructose-6-phosphate. The sequence is that of Probable glucose-6-phosphate isomerase from Haloquadratum walsbyi (strain DSM 16790 / HBSQ001).